We begin with the raw amino-acid sequence, 329 residues long: uncharacterized protein (329 aa).

The first 22 residues, 1 to 22 (MPLCNNFSGNLVVAVALFFAGA), serve as a signal peptide directing secretion.

This is an uncharacterized protein from Arabidopsis thaliana (Mouse-ear cress).